Consider the following 139-residue polypeptide: Protein archease (139 aa).

Residues D12, D138, and I139 each coordinate Ca(2+).

This sequence belongs to the archease family.

In terms of biological role, activates the tRNA-splicing ligase complex by facilitating the enzymatic turnover of catalytic subunit RtcB. Acts by promoting the guanylylation of RtcB, a key intermediate step in tRNA ligation. Can also alter the NTP specificity of RtcB such that ATP, dGTP or ITP is used efficiently. This chain is Protein archease, found in Saccharolobus solfataricus (strain ATCC 35092 / DSM 1617 / JCM 11322 / P2) (Sulfolobus solfataricus).